Consider the following 236-residue polypeptide: Peptidase E (236 aa).

Catalysis depends on charge relay system residues S122, D137, and H159.

Belongs to the peptidase S51 family.

Its subcellular location is the cytoplasm. The catalysed reaction is Dipeptidase E catalyzes the hydrolysis of dipeptides Asp-|-Xaa. It does not act on peptides with N-terminal Glu, Asn or Gln, nor does it cleave isoaspartyl peptides.. Its function is as follows. Hydrolyzes dipeptides containing N-terminal aspartate residues. May play a role in allowing the cell to use peptide aspartate to spare carbon otherwise required for the synthesis of the aspartate family of amino acids. In Shewanella oneidensis (strain ATCC 700550 / JCM 31522 / CIP 106686 / LMG 19005 / NCIMB 14063 / MR-1), this protein is Peptidase E.